The chain runs to 244 residues: 1-(5-phosphoribosyl)-5-[(5-phosphoribosylamino)methylideneamino] imidazole-4-carboxamide isomerase (244 aa).

Residue aspartate 10 is the Proton acceptor of the active site. Aspartate 132 acts as the Proton donor in catalysis.

It belongs to the HisA/HisF family.

It is found in the cytoplasm. It catalyses the reaction 1-(5-phospho-beta-D-ribosyl)-5-[(5-phospho-beta-D-ribosylamino)methylideneamino]imidazole-4-carboxamide = 5-[(5-phospho-1-deoxy-D-ribulos-1-ylimino)methylamino]-1-(5-phospho-beta-D-ribosyl)imidazole-4-carboxamide. The protein operates within amino-acid biosynthesis; L-histidine biosynthesis; L-histidine from 5-phospho-alpha-D-ribose 1-diphosphate: step 4/9. In Stenotrophomonas maltophilia (strain R551-3), this protein is 1-(5-phosphoribosyl)-5-[(5-phosphoribosylamino)methylideneamino] imidazole-4-carboxamide isomerase.